The primary structure comprises 590 residues: MKTGRVLKISGPLVVAEGMEEANIYDVVKVGEKRLIGEIIEMREDRASIQVYEETAGLAPGDPVITTGEPLSVELGPGLIEAMFDGIQRPLNAIKAKAGDFITKGVEVHSLDRDKKWHFTPVKKVGDTVEAGDVIGIVQETSIVEHKIMVPYGIKGTIETIEEGDFTVVDTVAKVKDKDKVSDLMMMQKWPVRRGRPYGRKLNPAQPMITGQRVIDTFFPVTKGGTACVPGPFGSGKTVVQHQLAKWADAQIVVYIGCGERGNEMTDVLNEFPELKDPKTGEPLMKRTVLIANTSNMPVAAREASIYTGITIGEYFRDMGYSIALMADSTSRWAEALREMSGRLEEMPGDEGYPAYLGSRAAEFYERAGNVVSIGSEEREGALTVIGAVSPPGGDLSEPVTQATLRIVKVFWGLDAQLAYRRHFPAINWLNSYSLYIEKISPWMDENVASDWTALRIKAMSLLQEEASLEEIVRLVGIDALSEKDRLKLEVAKSLREDYLQQNAFHEVDTYASLGKQYKMLKLVLFFYDEAQRALNAGVYLKELLDLEVRDKIARAKYISEENIENIDAIFNELSEVIDQLISKGGIMNA.

231–238 (GPFGSGKT) is an ATP binding site.

It belongs to the ATPase alpha/beta chains family.

It carries out the reaction ATP + H2O + 4 H(+)(in) = ADP + phosphate + 5 H(+)(out). In terms of biological role, produces ATP from ADP in the presence of a proton gradient across the membrane. The V-type alpha chain is a catalytic subunit. This is V-type ATP synthase alpha chain from Clostridium botulinum (strain ATCC 19397 / Type A).